The following is a 211-amino-acid chain: Probable calcium-binding protein CML11 (211 aa).

Disordered stretches follow at residues methionine 1–threonine 22 and serine 40–aspartate 60. A compositionally biased stretch (low complexity) spans glutamine 44 to glutamine 53. EF-hand domains lie at aspartate 60–lysine 95, proline 96–tyrosine 131, tyrosine 136–alanine 171, and leucine 172–aspartate 207. Residues aspartate 73, asparagine 75, aspartate 77, serine 79, glutamate 84, aspartate 109, asparagine 111, asparagine 113, glutamate 120, aspartate 149, aspartate 151, asparagine 153, glutamate 160, aspartate 185, aspartate 187, aspartate 189, arginine 191, and glutamate 196 each contribute to the Ca(2+) site.

Potential calcium sensor. In Oryza sativa subsp. japonica (Rice), this protein is Probable calcium-binding protein CML11 (CML11).